A 134-amino-acid chain; its full sequence is Translation initiation factor 5A (134 aa).

The residue at position 36 (lysine 36) is a Hypusine.

The protein belongs to the eIF-5A family.

The protein resides in the cytoplasm. Functions by promoting the formation of the first peptide bond. In Korarchaeum cryptofilum (strain OPF8), this protein is Translation initiation factor 5A (eIF5A).